The following is a 245-amino-acid chain: tRNA1(Val) (adenine(37)-N6)-methyltransferase (245 aa).

Belongs to the methyltransferase superfamily. tRNA (adenine-N(6)-)-methyltransferase family.

The protein localises to the cytoplasm. The catalysed reaction is adenosine(37) in tRNA1(Val) + S-adenosyl-L-methionine = N(6)-methyladenosine(37) in tRNA1(Val) + S-adenosyl-L-homocysteine + H(+). Functionally, specifically methylates the adenine in position 37 of tRNA(1)(Val) (anticodon cmo5UAC). The sequence is that of tRNA1(Val) (adenine(37)-N6)-methyltransferase from Citrobacter koseri (strain ATCC BAA-895 / CDC 4225-83 / SGSC4696).